The primary structure comprises 701 residues: Polyribonucleotide nucleotidyltransferase (701 aa).

Residues D490 and D496 each coordinate Mg(2+). The KH domain maps to 557 to 616 (PKVETMTIKPEKIRDVIGPGGKKINEIIDETGVKLDIEQDGTIFIGAVDQDMINRAREII). In terms of domain architecture, S1 motif spans 626 to 694 (GQVYNAKVRR…DKGRVNASHR (69 aa)).

The protein belongs to the polyribonucleotide nucleotidyltransferase family. It depends on Mg(2+) as a cofactor.

It is found in the cytoplasm. The enzyme catalyses RNA(n+1) + phosphate = RNA(n) + a ribonucleoside 5'-diphosphate. In terms of biological role, involved in mRNA degradation. Catalyzes the phosphorolysis of single-stranded polyribonucleotides processively in the 3'- to 5'-direction. In Staphylococcus carnosus (strain TM300), this protein is Polyribonucleotide nucleotidyltransferase.